A 1215-amino-acid polypeptide reads, in one-letter code: Inner capsid protein VP3 (1215 aa).

Residues 1-81 are disordered; sequence MPRRPRRNAK…RVDNDGDVIT (81 aa). The span at 21–44 shows a compositional bias: low complexity; it reads LVAPAANASVSSTVNTTTSPTLAA. The C2H2-type zinc-finger motif lies at 118–141; it reads YRCNVCNAEFPSMSAMTEHLRTSH.

It belongs to the turreted BTV-fold inner capsid family. As to quaternary structure, homodecamer; each decamer is made up of two conformers of VP2, called VP2A and VP2B. 12 homodecamers assemble to form an icosahedral capsid. Interacts with VP6.

It is found in the virion. Functionally, inner capsid protein that self-assembles to form an icosahedral capsid with a T=2 symmetry, which consists of 120 copies of VP2, with channels at each of its five-fold vertices. This capsid constitutes the innermost concentric layer of the viral mature particle. This chain is Inner capsid protein VP3 (S3), found in Ctenopharyngodon idella (Grass carp).